A 223-amino-acid polypeptide reads, in one-letter code: Putative nudix hydrolase 2 (223 aa).

A Nudix hydrolase domain is found at 72-213; the sequence is ASADGVSIIA…SIVVESTLLA (142 aa). Residues 111–132 carry the Nudix box motif; sequence GLIDAGETAQQAAIRELKEETG. The Mg(2+) site is built by Glu-126 and Glu-130.

The protein belongs to the Nudix hydrolase family. The cofactor is Mg(2+). It depends on Mn(2+) as a cofactor.

Functionally, probably mediates the hydrolysis of some nucleoside diphosphate derivatives. The sequence is that of Putative nudix hydrolase 2 (ndx-2) from Caenorhabditis elegans.